A 343-amino-acid chain; its full sequence is Endoglucanase C (343 aa).

Glutamate 140 acts as the Proton donor in catalysis. The active-site Nucleophile is the glutamate 280.

The protein belongs to the glycosyl hydrolase 5 (cellulase A) family.

The catalysed reaction is Endohydrolysis of (1-&gt;4)-beta-D-glucosidic linkages in cellulose, lichenin and cereal beta-D-glucans.. It functions in the pathway glycan metabolism; cellulose degradation. In terms of biological role, this enzyme catalyzes the endohydrolysis of 1,4-beta-glucosidic linkages in cellulose, lichenin and cereal beta-D-glucans. The chain is Endoglucanase C (celC) from Acetivibrio thermocellus (strain ATCC 27405 / DSM 1237 / JCM 9322 / NBRC 103400 / NCIMB 10682 / NRRL B-4536 / VPI 7372) (Clostridium thermocellum).